A 239-amino-acid chain; its full sequence is Ribonuclease 3 (239 aa).

Positions 11–133 constitute an RNase III domain; sequence HTAIQKKLGY…MFAAVSFDAD (123 aa). Mg(2+) is bound at residue glutamate 46. The active site involves aspartate 50. Mg(2+) contacts are provided by aspartate 119 and glutamate 122. Glutamate 122 is a catalytic residue. The DRBM domain maps to 160 to 230; the sequence is DGKTALQEAL…AKEALKWLEE (71 aa).

The protein belongs to the ribonuclease III family. In terms of assembly, homodimer. Mg(2+) serves as cofactor.

It localises to the cytoplasm. It carries out the reaction Endonucleolytic cleavage to 5'-phosphomonoester.. Its function is as follows. Digests double-stranded RNA. Involved in the processing of primary rRNA transcript to yield the immediate precursors to the large and small rRNAs (23S and 16S). Processes some mRNAs, and tRNAs when they are encoded in the rRNA operon. Processes pre-crRNA and tracrRNA of type II CRISPR loci if present in the organism. The polypeptide is Ribonuclease 3 (Neisseria gonorrhoeae (strain NCCP11945)).